A 190-amino-acid chain; its full sequence is NADH-ubiquinone oxidoreductase chain 5 (190 aa).

6 helical membrane passes run 1–21, 68–88, 94–114, 118–138, 146–166, and 167–187; these read MVISPSTLLVSITLSIICLIV, INILKFLAFLSLINLFLFVGL, NVTFSIWLSNTAANVSLSILF, FIVFLTVALVVTWSIMNFSLL, NVFLLLTIFLLNMLILTCSNS, and LFLLFLGWEGVGFLSFLLIKM.

The protein belongs to the complex I subunit 5 family.

The protein resides in the mitochondrion inner membrane. It carries out the reaction a ubiquinone + NADH + 5 H(+)(in) = a ubiquinol + NAD(+) + 4 H(+)(out). Core subunit of the mitochondrial membrane respiratory chain NADH dehydrogenase (Complex I) that is believed to belong to the minimal assembly required for catalysis. Complex I functions in the transfer of electrons from NADH to the respiratory chain. The immediate electron acceptor for the enzyme is believed to be ubiquinone. The protein is NADH-ubiquinone oxidoreductase chain 5 (ND5) of Arbacia lixula (Black urchin).